Here is a 366-residue protein sequence, read N- to C-terminus: Ferrochelatase (366 aa).

The Fe cation site is built by H209 and E290.

Belongs to the ferrochelatase family.

Its subcellular location is the cytoplasm. It carries out the reaction heme b + 2 H(+) = protoporphyrin IX + Fe(2+). Its pathway is porphyrin-containing compound metabolism; protoheme biosynthesis; protoheme from protoporphyrin-IX: step 1/1. Functionally, catalyzes the ferrous insertion into protoporphyrin IX. The chain is Ferrochelatase from Teredinibacter turnerae (strain ATCC 39867 / T7901).